A 1072-amino-acid chain; its full sequence is Zn(2)-C6 fungal-type transcription factor FTF1a (1072 aa).

Residues 178–205 constitute a DNA-binding region (zn(2)-C6 fungal-type); the sequence is CMACRRKKIRCSGEKPACKHCLRSRILC.

It is found in the nucleus. In terms of biological role, zn(2)-C6 fungal-type transcription factor that has a role in the establishment of the fungus within the plant and/or the progress of the disease. Regulates the expression of virulence factors such as SIX1 and SIX6. This chain is Zn(2)-C6 fungal-type transcription factor FTF1a, found in Fusarium oxysporum f. sp. lycopersici (strain 4287 / CBS 123668 / FGSC 9935 / NRRL 34936) (Fusarium vascular wilt of tomato).